We begin with the raw amino-acid sequence, 159 residues long: Serine-protein kinase RsbW (159 aa).

This sequence belongs to the anti-sigma-factor family.

The enzyme catalyses L-seryl-[protein] + ATP = O-phospho-L-seryl-[protein] + ADP + H(+). It carries out the reaction L-threonyl-[protein] + ATP = O-phospho-L-threonyl-[protein] + ADP + H(+). Functionally, negative regulator of sigma-B activity. Phosphorylates and inactivates its specific antagonist protein, RsbV. Upon phosphorylation of RsbV, RsbW is released and binds to sigma-B, thereby blocking its ability to form an RNA polymerase holoenzyme (E-sigma-B). The sequence is that of Serine-protein kinase RsbW from Staphylococcus aureus (strain MRSA252).